The primary structure comprises 142 residues: Large ribosomal subunit protein uL13 (142 aa).

This sequence belongs to the universal ribosomal protein uL13 family. As to quaternary structure, part of the 50S ribosomal subunit.

Functionally, this protein is one of the early assembly proteins of the 50S ribosomal subunit, although it is not seen to bind rRNA by itself. It is important during the early stages of 50S assembly. The polypeptide is Large ribosomal subunit protein uL13 (Thermococcus kodakarensis (strain ATCC BAA-918 / JCM 12380 / KOD1) (Pyrococcus kodakaraensis (strain KOD1))).